Reading from the N-terminus, the 96-residue chain is Large ribosomal subunit protein eL43 (96 aa).

The C4-type zinc-finger motif lies at 39-60 (CTFCGKTATKRTCVGIWKCKKC).

It belongs to the eukaryotic ribosomal protein eL43 family. Component of the large ribosomal subunit. Mature ribosomes consist of a small (40S) and a large (60S) subunit. The 40S subunit contains about 32 different proteins and 1 molecule of RNA (18S). The 60S subunit contains about 42 different proteins and 3 molecules of RNA (28S, 5.8S and 5S).

Its subcellular location is the cytoplasm. Functionally, component of the ribosome, a large ribonucleoprotein complex responsible for the synthesis of proteins in the cell. The small ribosomal subunit (SSU) binds messenger RNAs (mRNAs) and translates the encoded message by selecting cognate aminoacyl-transfer RNA (tRNA) molecules. The large subunit (LSU) contains the ribosomal catalytic site termed the peptidyl transferase center (PTC), which catalyzes the formation of peptide bonds, thereby polymerizing the amino acids delivered by tRNAs into a polypeptide chain. The nascent polypeptides leave the ribosome through a tunnel in the LSU and interact with protein factors that function in enzymatic processing, targeting, and the membrane insertion of nascent chains at the exit of the ribosomal tunnel. This chain is Large ribosomal subunit protein eL43, found in Plasmodium falciparum (isolate 3D7).